Here is a 469-residue protein sequence, read N- to C-terminus: Cytochrome P450 85A1 (469 aa).

Residues 1–21 (MVLVAIGVVVAAAVVVSSLLL) traverse the membrane as a helical segment. Cys-419 is a binding site for heme.

This sequence belongs to the cytochrome P450 family. It depends on heme as a cofactor. In terms of tissue distribution, expressed at low levels in all the tissues, but preferentially in the leaf sheath.

The protein resides in the membrane. The catalysed reaction is 6-deoxoteasterone + reduced [NADPH--hemoprotein reductase] + O2 = 6alpha-hydroxyteasterone + oxidized [NADPH--hemoprotein reductase] + H2O + H(+). It catalyses the reaction 6alpha-hydroxytyphasterol + reduced [NADPH--hemoprotein reductase] + O2 = teasterone + oxidized [NADPH--hemoprotein reductase] + 2 H2O + H(+). The enzyme catalyses 3-dehydro-6-deoxoteasterone + reduced [NADPH--hemoprotein reductase] + O2 = 3-dehydro-6alpha-hydroxyteasterone + oxidized [NADPH--hemoprotein reductase] + H2O + H(+). It carries out the reaction 3-dehydro-6alpha-hydroxyteasterone + reduced [NADPH--hemoprotein reductase] + O2 = 3-dehydroteasterone + oxidized [NADPH--hemoprotein reductase] + 2 H2O + H(+). The catalysed reaction is 6-deoxotyphasterol + reduced [NADPH--hemoprotein reductase] + O2 = 6alpha-hydroxytyphasterol + oxidized [NADPH--hemoprotein reductase] + H2O + H(+). It catalyses the reaction 6alpha-hydroxytyphasterol + reduced [NADPH--hemoprotein reductase] + O2 = typhasterol + oxidized [NADPH--hemoprotein reductase] + 2 H2O + H(+). The enzyme catalyses 3-dehydro-6-deoxoteasterone + 2 reduced [NADPH--hemoprotein reductase] + 2 O2 = 3-dehydroteasterone + 2 oxidized [NADPH--hemoprotein reductase] + 3 H2O + 2 H(+). It carries out the reaction 6-deoxoteasterone + 2 reduced [NADPH--hemoprotein reductase] + 2 O2 = teasterone + 2 oxidized [NADPH--hemoprotein reductase] + 3 H2O + 2 H(+). The catalysed reaction is 6-deoxotyphasterol + 2 reduced [NADPH--hemoprotein reductase] + 2 O2 = typhasterol + 2 oxidized [NADPH--hemoprotein reductase] + 3 H2O + 2 H(+). The protein operates within plant hormone biosynthesis; brassinosteroid biosynthesis. Its function is as follows. Catalyzes the C6-oxidation step in brassinosteroids biosynthesis. May convert 6-deoxoteasterone (6-deoxoTE) to teasterone (TE), 3-dehydro-6-deoxoteasterone (6-deoxo3DT, 6-deoxo3DHT) to 3-dehydroteasterone (3DT, 3-DHT), and 6-deoxotyphasterol (6-deoxoTY) to typhasterol (TY). Involved in the organization and elongation of the leaf and stem cells. Not able to convert 6-deoxocastasterone (6-deoxoCS) and castasterone (CS) to brassinolide (BL). This is Cytochrome P450 85A1 from Oryza sativa subsp. japonica (Rice).